The chain runs to 414 residues: Histidine--tRNA ligase (414 aa).

It belongs to the class-II aminoacyl-tRNA synthetase family. Homodimer.

The protein resides in the cytoplasm. It carries out the reaction tRNA(His) + L-histidine + ATP = L-histidyl-tRNA(His) + AMP + diphosphate + H(+). This is Histidine--tRNA ligase from Rickettsia africae (strain ESF-5).